Here is a 354-residue protein sequence, read N- to C-terminus: MGCTLSAEERAALERSKAIEKNLKEDGISAAKDVKLLLLGAGESGKSTIVKQMKIIHEDGFSGEDVKQYKPVVYSNTIQSLAAIVRAMDTLGIEYGDKERKADAKMVCDVVSRMEDTEPFSAELLSAMMRLWGDSGIQECFNRSREYQLNDSAKYYLDSLDRIGAADYQPTEQDILRTRVKTTGIVETHFTFKNLHFRLFDVGGQRSERKKWIHCFEDVTAIIFCVALSGYDQVLHEDETTNRMHESLMLFDSICNNKFFIDTSIILFLNKKDLFGEKIKKSPLTICFPEYTGPNTYEDAAAYIQAQFESKNRSPNKEIYCHMTCATDTNNIQVVFDAVTDIIIANNLRGCGLY.

Gly2 carries N-myristoyl glycine lipidation. A lipid anchor (S-palmitoyl cysteine) is attached at Cys3. The G-alpha domain occupies 32–354; the sequence is KDVKLLLLGA…ANNLRGCGLY (323 aa). Residues 35–48 form a G1 motif region; sequence KLLLLGAGESGKST. The GTP site is built by Glu43, Lys46, Ser47, Thr48, Ser152, Leu176, Arg177, Thr178, and Arg179. Ser47 serves as a coordination point for Mg(2+). The G2 motif stretch occupies residues 174–182; that stretch reads DILRTRVKT. The residue at position 179 (Arg179) is an ADP-ribosylarginine; by cholera toxin. Thr182 is a Mg(2+) binding site. The G3 motif stretch occupies residues 197 to 206; the sequence is FRLFDVGGQR. Residue Gln205 is modified to 5-glutamyl histamine. The segment at 266 to 273 is G4 motif; the sequence is ILFLNKKD. Positions 270, 273, and 325 each coordinate GTP. The segment at 324 to 329 is G5 motif; that stretch reads TCATDT. Cys351 carries S-palmitoyl cysteine lipidation. An ADP-ribosylcysteine; by pertussis toxin modification is found at Cys351.

This sequence belongs to the G-alpha family. G(i/o/t/z) subfamily. G proteins are composed of 3 units; alpha, beta and gamma. The alpha chain contains the guanine nucleotide binding site. Forms a complex with GNB1 and GNG3. Interacts with RGS14. Interacts with RGS16. Interacts with RGS19. Interacts (when palmitoylated) with ADGRG3. Histaminylated at Gln-205 residues by TGM2. Post-translationally, palmitoylated at Cys-351, leading to binding to ADGRG3.

It localises to the cell membrane. The protein localises to the membrane. It catalyses the reaction GTP + H2O = GDP + phosphate + H(+). With respect to regulation, the GTPase activity is promoted by GTPAse activators, such as RGS14, RGS16 and RGS19. Guanine nucleotide-binding proteins (G proteins) function as transducers downstream of G protein-coupled receptors (GPCRs) in numerous signaling cascades. The alpha chain contains the guanine nucleotide binding site and alternates between an active, GTP-bound state and an inactive, GDP-bound state. Signaling by an activated GPCR promotes GDP release and GTP binding. The alpha subunit has a low GTPase activity that converts bound GTP to GDP, thereby terminating the signal. Both GDP release and GTP hydrolysis are modulated by numerous regulatory proteins. Signaling is mediated via effector proteins, such as adenylate cyclase. Inhibits adenylate cyclase activity, leading to decreased intracellular cAMP levels. This Homo sapiens (Human) protein is Guanine nucleotide-binding protein G(o) subunit alpha (GNAO1).